Consider the following 166-residue polypeptide: MSKSICSTGLRWLWVVVAVLIIDLGSKFLILQNFALGETVPLFPSLNLHYARNYGAAFSFLADSGGWQRWFFSGIAIGICVVLTVLMYRSKATQKLNNIAYALIIGGALGNLFDRLWHGFVVDMIDFYVGDWHFATFNLADSAICIGAALIVLEGFLPKPTVKEQA.

The next 3 membrane-spanning stretches (helical) occupy residues 12-32 (WLWV…LILQ), 70-90 (WFFS…MYRS), and 102-122 (ALII…GFVV). Active-site residues include Asp123 and Asp141. A helical membrane pass occupies residues 137–157 (FNLADSAICIGAALIVLEGFL).

This sequence belongs to the peptidase A8 family.

It localises to the cell inner membrane. It catalyses the reaction Release of signal peptides from bacterial membrane prolipoproteins. Hydrolyzes -Xaa-Yaa-Zaa-|-(S,diacylglyceryl)Cys-, in which Xaa is hydrophobic (preferably Leu), and Yaa (Ala or Ser) and Zaa (Gly or Ala) have small, neutral side chains.. It participates in protein modification; lipoprotein biosynthesis (signal peptide cleavage). This protein specifically catalyzes the removal of signal peptides from prolipoproteins. This chain is Lipoprotein signal peptidase, found in Klebsiella pneumoniae subsp. pneumoniae (strain ATCC 700721 / MGH 78578).